Here is a 1050-residue protein sequence, read N- to C-terminus: Mitotic checkpoint serine/threonine-protein kinase BUB1 beta (1050 aa).

Residues 62–226 enclose the BUB1 N-terminal domain; it reads FEYEIRFYTG…FESSVPQRST (165 aa). A Nuclear localization signal motif is present at residues 111-118; that stretch reads GEKRYYSD. The interval 152 to 185 is necessary for interaction with KNL1; the sequence is AQFYISWAEEYEARENFRKADAIFQEGIQQKAEP. Positions 224 to 232 match the D-box motif; that stretch reads RSTLAELKS. N6-acetyllysine; by PCAF is present on K250. A Phosphoserine modification is found at S367. The interval 368–393 is disordered; that stretch reads TRKPGKEEGDPLQRVQSHQQASEEKK. Position 435 is a phosphoserine (S435). The interval 456–480 is disordered; sequence IQTTQQERTGDQQEETMPTKETTKL. Phosphoserine occurs at positions 543, 665, and 670. The residue at position 676 (S676) is a Phosphoserine; by PLK1. A Phosphoserine modification is found at S697. The 285-residue stretch at 766–1050 folds into the Protein kinase domain; the sequence is YCIKREYLIC…LTSPGALLFQ (285 aa). Residue 772–780 coordinates ATP; the sequence is YLICEDYKL. T792 is modified (phosphothreonine; by PLK1). Residue K795 participates in ATP binding. D882 functions as the Proton acceptor in the catalytic mechanism. The residue at position 1008 (T1008) is a Phosphothreonine; by PLK1. T1042 carries the phosphothreonine modification. A Phosphoserine modification is found at S1043.

This sequence belongs to the protein kinase superfamily. Ser/Thr protein kinase family. BUB1 subfamily. In terms of assembly, interacts with CENPE. Interacts with PLK1. Part of a complex containing BUB3, CDC20 and BUB1B. Interacts with anaphase-promoting complex/cyclosome (APC/C). Interacts with KNL1. Interacts with KAT2B. Interacts with RIPK3. Interacts with the closed conformation form of MAD2L1. Post-translationally, proteolytically cleaved by caspase-3 in a cell cycle specific manner. The cleavage might be involved in the durability of the cell cycle delay. Caspase-3 cleavage is associated with abrogation of the mitotic checkpoint. The major site of cleavage is at Asp-610. In terms of processing, acetylation at Lys-250 regulates its degradation and timing in anaphase entry. Ubiquitinated. Degraded by the proteasome. Ubiquitinated by UBR5, promoting disassembly of the mitotic checkpoint complex from the APC/C complex. Post-translationally, sumoylated with SUMO2 and SUMO3. The sumoylation mediates the association with CENPE at the kinetochore. In terms of processing, autophosphorylated in vitro. Intramolecular autophosphorylation is stimulated by CENPE. Phosphorylated during mitosis and hyperphosphorylated in mitotically arrested cells. Phosphorylation at Ser-670 and Ser-1043 occurs at kinetochores upon mitotic entry with dephosphorylation at the onset of anaphase. In terms of tissue distribution, highly expressed in thymus followed by spleen. Preferentially expressed in tissues with a high mitotic index.

It localises to the cytoplasm. The protein localises to the nucleus. It is found in the chromosome. Its subcellular location is the centromere. The protein resides in the kinetochore. It localises to the cytoskeleton. The protein localises to the microtubule organizing center. It is found in the centrosome. The enzyme catalyses L-seryl-[protein] + ATP = O-phospho-L-seryl-[protein] + ADP + H(+). It catalyses the reaction L-threonyl-[protein] + ATP = O-phospho-L-threonyl-[protein] + ADP + H(+). With respect to regulation, kinase activity stimulated by CENPE. In terms of biological role, essential component of the mitotic checkpoint. Required for normal mitosis progression. The mitotic checkpoint delays anaphase until all chromosomes are properly attached to the mitotic spindle. One of its checkpoint functions is to inhibit the activity of the anaphase-promoting complex/cyclosome (APC/C) by blocking the binding of CDC20 to APC/C, independently of its kinase activity. The other is to monitor kinetochore activities that depend on the kinetochore motor CENPE. Required for kinetochore localization of CENPE. Negatively regulates PLK1 activity in interphase cells and suppresses centrosome amplification. Also implicated in triggering apoptosis in polyploid cells that exit aberrantly from mitotic arrest. May play a role for tumor suppression. The sequence is that of Mitotic checkpoint serine/threonine-protein kinase BUB1 beta (BUB1B) from Homo sapiens (Human).